Consider the following 199-residue polypeptide: Recombination protein RecR (199 aa).

A C4-type zinc finger spans residues 58–73 (CSVCYGLADSDPCHIC). One can recognise a Toprim domain in the interval 81–176 (DVVCVVEQGT…KITRIASGVP (96 aa)).

Belongs to the RecR family.

Functionally, may play a role in DNA repair. It seems to be involved in an RecBC-independent recombinational process of DNA repair. It may act with RecF and RecO. In Desulfatibacillum aliphaticivorans, this protein is Recombination protein RecR.